The chain runs to 488 residues: Ribulose bisphosphate carboxylase large chain 2 (488 aa).

Residues N128 and T178 each coordinate substrate. K180 functions as the Proton acceptor in the catalytic mechanism. K182 provides a ligand contact to substrate. Positions 206, 208, and 209 each coordinate Mg(2+). The residue at position 206 (K206) is an N6-carboxylysine. Residue H298 is the Proton acceptor of the active site. Substrate is bound by residues R299, H331, and S383.

This sequence belongs to the RuBisCO large chain family. Type I subfamily. In terms of assembly, heterohexadecamer of 8 large chains and 8 small chains. Mg(2+) is required as a cofactor.

The enzyme catalyses 2 (2R)-3-phosphoglycerate + 2 H(+) = D-ribulose 1,5-bisphosphate + CO2 + H2O. It catalyses the reaction D-ribulose 1,5-bisphosphate + O2 = 2-phosphoglycolate + (2R)-3-phosphoglycerate + 2 H(+). Functionally, ruBisCO catalyzes two reactions: the carboxylation of D-ribulose 1,5-bisphosphate, the primary event in carbon dioxide fixation, as well as the oxidative fragmentation of the pentose substrate. Both reactions occur simultaneously and in competition at the same active site. The sequence is that of Ribulose bisphosphate carboxylase large chain 2 from Nitrobacter hamburgensis (strain DSM 10229 / NCIMB 13809 / X14).